We begin with the raw amino-acid sequence, 338 residues long: Phenylalanine--tRNA ligase alpha subunit (338 aa).

Glu-252 lines the Mg(2+) pocket.

Belongs to the class-II aminoacyl-tRNA synthetase family. Phe-tRNA synthetase alpha subunit type 1 subfamily. Tetramer of two alpha and two beta subunits. It depends on Mg(2+) as a cofactor.

Its subcellular location is the cytoplasm. The catalysed reaction is tRNA(Phe) + L-phenylalanine + ATP = L-phenylalanyl-tRNA(Phe) + AMP + diphosphate + H(+). This chain is Phenylalanine--tRNA ligase alpha subunit, found in Fusobacterium nucleatum subsp. nucleatum (strain ATCC 25586 / DSM 15643 / BCRC 10681 / CIP 101130 / JCM 8532 / KCTC 2640 / LMG 13131 / VPI 4355).